The primary structure comprises 215 residues: Octanoyltransferase (215 aa).

The BPL/LPL catalytic domain occupies 31–206; it reads TSAEDEIWLV…QLVKHLDYAE (176 aa). Residues 70 to 77, 137 to 139, and 150 to 152 contribute to the substrate site; these read RGGQVTYH, SLG, and GLA. Catalysis depends on Cys168, which acts as the Acyl-thioester intermediate.

It belongs to the LipB family.

The protein resides in the cytoplasm. It carries out the reaction octanoyl-[ACP] + L-lysyl-[protein] = N(6)-octanoyl-L-lysyl-[protein] + holo-[ACP] + H(+). It participates in protein modification; protein lipoylation via endogenous pathway; protein N(6)-(lipoyl)lysine from octanoyl-[acyl-carrier-protein]: step 1/2. Its function is as follows. Catalyzes the transfer of endogenously produced octanoic acid from octanoyl-acyl-carrier-protein onto the lipoyl domains of lipoate-dependent enzymes. Lipoyl-ACP can also act as a substrate although octanoyl-ACP is likely to be the physiological substrate. The polypeptide is Octanoyltransferase (Pseudomonas fluorescens (strain SBW25)).